Here is a 286-residue protein sequence, read N- to C-terminus: Hydroxysteroid 11-beta-dehydrogenase 1-like protein (286 aa).

The signal sequence occupies residues 1-17 (MGIHIKRWCFIILVASA). NADP(+)-binding positions include 39–65 (GAST…TARR), 90–91 (DM), and 117–119 (NHI). A substrate-binding site is contributed by Ser168. The Proton acceptor role is filled by Tyr181. NADP(+) is bound by residues 181-185 (YAASK) and 214-220 (GLIDTQS).

Belongs to the short-chain dehydrogenases/reductases (SDR) family.

The protein localises to the secreted. It carries out the reaction cortisone + NADPH + H(+) = cortisol + NADP(+). Unidirectional NADP(+)-dependent cortisol dehydrogenase (in vitro). This chain is Hydroxysteroid 11-beta-dehydrogenase 1-like protein (hsd11b1l), found in Xenopus tropicalis (Western clawed frog).